Here is a 72-residue protein sequence, read N- to C-terminus: Translation initiation factor IF-1 (72 aa).

One can recognise an S1-like domain in the interval 1–72 (MAKEDCIEME…TKGRIKFRSK (72 aa)).

This sequence belongs to the IF-1 family. As to quaternary structure, component of the 30S ribosomal translation pre-initiation complex which assembles on the 30S ribosome in the order IF-2 and IF-3, IF-1 and N-formylmethionyl-tRNA(fMet); mRNA recruitment can occur at any time during PIC assembly.

Its subcellular location is the cytoplasm. One of the essential components for the initiation of protein synthesis. Stabilizes the binding of IF-2 and IF-3 on the 30S subunit to which N-formylmethionyl-tRNA(fMet) subsequently binds. Helps modulate mRNA selection, yielding the 30S pre-initiation complex (PIC). Upon addition of the 50S ribosomal subunit IF-1, IF-2 and IF-3 are released leaving the mature 70S translation initiation complex. The polypeptide is Translation initiation factor IF-1 (Francisella tularensis subsp. novicida (strain U112)).